The sequence spans 97 residues: Apolipoprotein C-II (97 aa).

The signal sequence occupies residues 1-22 (MGSRFFLALFLVLLVLGNEVQG). A lipid binding region spans residues 63–71 (SVDEKLRDM). A lipoprotein lipase cofactor region spans residues 75 to 97 (SSAAMSTYAGIFTDQLLTLLKGE).

It belongs to the apolipoprotein C2 family. Post-translationally, proapolipoprotein C-II is synthesized as a sialic acid containing glycoprotein which is subsequently desialylated prior to its proteolytic processing. Proapolipoprotein C-II, the major form found in plasma undergoes proteolytic cleavage of its N-terminal hexapeptide to generate the mature form apolipoprotein C-II, which occurs as the minor form in plasma.

The protein localises to the secreted. Its function is as follows. Component of chylomicrons, very low-density lipoproteins (VLDL), low-density lipoproteins (LDL), and high-density lipoproteins (HDL) in plasma. Plays an important role in lipoprotein metabolism as an activator of lipoprotein lipase. The chain is Apolipoprotein C-II (Apoc2) from Grammomys surdaster (African woodland thicket rat).